Consider the following 535-residue polypeptide: Estrogen receptor (535 aa).

The segment at 1-21 is disordered; that stretch reads SRMLTDPPRIGSMQSLGSSPT. The modulating stretch occupies residues 1 to 104; sequence SRMLTDPPRI…VFEMANETRY (104 aa). The span at 12-21 shows a compositional bias: polar residues; it reads SMQSLGSSPT. 2 NR C4-type zinc fingers span residues 105 to 125 and 141 to 165; these read CAVC…CEGC and CPAT…LRKC. The segment at residues 105-170 is a DNA-binding region (nuclear receptor); sequence CAVCSDFASG…RLRKCYEVGM (66 aa). The segment at 171–236 is hinge; sequence VKGGLRKDRG…GGWCGPRITM (66 aa). The tract at residues 187 to 229 is disordered; that stretch reads DKRYCGPAGDREKPYGDLEHRTAPPQDGGRNSSSSSLSGGGGW. The span at 195–208 shows a compositional bias: basic and acidic residues; the sequence is GDREKPYGDLEHRT. The segment covering 214–223 has biased composition (low complexity); the sequence is GGRNSSSSSL. An NR LBD domain is found at 237–473; sequence PPEQVLFLLQ…DLLLEMLDGH (237 aa). Residues 478-535 form a disordered region; the sequence is PGKVAQAGEQTEGPSTTTTTSTGSSIGPMRGSQDTHIRSPGSGVLQYGSPSSDQMPIP. Positions 492 to 502 are enriched in low complexity; sequence STTTTTSTGSS. The segment covering 525-535 has biased composition (polar residues); that stretch reads GSPSSDQMPIP.

This sequence belongs to the nuclear hormone receptor family. NR3 subfamily. As to quaternary structure, binds DNA as a homodimer. Can form a heterodimer with ER-beta. Highest expression in brain and liver.

It localises to the nucleus. Functionally, the steroid hormones and their receptors are involved in the regulation of eukaryotic gene expression and affect cellular proliferation and differentiation in target tissues. This Salmo salar (Atlantic salmon) protein is Estrogen receptor (esr1).